The sequence spans 269 residues: GTP cyclohydrolase FolE2 (269 aa).

It belongs to the GTP cyclohydrolase IV family.

The catalysed reaction is GTP + H2O = 7,8-dihydroneopterin 3'-triphosphate + formate + H(+). It participates in cofactor biosynthesis; 7,8-dihydroneopterin triphosphate biosynthesis; 7,8-dihydroneopterin triphosphate from GTP: step 1/1. In terms of biological role, converts GTP to 7,8-dihydroneopterin triphosphate. The sequence is that of GTP cyclohydrolase FolE2 from Burkholderia thailandensis (strain ATCC 700388 / DSM 13276 / CCUG 48851 / CIP 106301 / E264).